Consider the following 258-residue polypeptide: Acetylglutamate kinase (258 aa).

Substrate is bound by residues 44–45 (GG), Arg66, and Asn158. ATP-binding positions include 181 to 186 (DVSGIL) and 209 to 211 (IIT).

Belongs to the acetylglutamate kinase family. ArgB subfamily. In terms of assembly, homodimer.

It is found in the cytoplasm. It carries out the reaction N-acetyl-L-glutamate + ATP = N-acetyl-L-glutamyl 5-phosphate + ADP. It functions in the pathway amino-acid biosynthesis; L-arginine biosynthesis; N(2)-acetyl-L-ornithine from L-glutamate: step 2/4. Catalyzes the ATP-dependent phosphorylation of N-acetyl-L-glutamate. The polypeptide is Acetylglutamate kinase (Shigella flexneri serotype 5b (strain 8401)).